A 431-amino-acid polypeptide reads, in one-letter code: MNFTKSEQLYQEALEHIVGGVNSPSRSYKAVGGGAPVVMERAQGAYFWDVDGNKYIDYLAAYGPIITGHAHPHITKAIQHAAENGVLYGTPTPYEITFAKMLKEAIPSLEKVRFVNSGTEAVMTTIRVARAYTGRDKIVKFAGCYHGHSDLVLVAAGSGPSTLGTPDSAGVPKSIAQEVITVPFNDVDAFKQAMDRWGNEVAAVLVEPIVGNFGIVEPKPGFLQAINDIAHAVGALVIYDEVITAFRFMYGGAQNLLGIEPDLTALGKIIGGGLPIGAYGGRKDIMEQVAPLGPAYQAGTMAGNPASILAGIACLEVLQQEGVYEHLDHLGAMLEAGILTHAKTYDIPITINRLKGALTVYFTTEKVENYEQAERTDGEMFAKFFKLMLHQGINLAPSKYEAWFITLAHTEEDIEYTIEAVERAFKSLKNE.

Lysine 268 is subject to N6-(pyridoxal phosphate)lysine.

Belongs to the class-III pyridoxal-phosphate-dependent aminotransferase family. HemL subfamily. In terms of assembly, homodimer. Requires pyridoxal 5'-phosphate as cofactor.

It is found in the cytoplasm. It carries out the reaction (S)-4-amino-5-oxopentanoate = 5-aminolevulinate. It participates in porphyrin-containing compound metabolism; protoporphyrin-IX biosynthesis; 5-aminolevulinate from L-glutamyl-tRNA(Glu): step 2/2. The polypeptide is Glutamate-1-semialdehyde 2,1-aminomutase 1 (Anoxybacillus flavithermus (strain DSM 21510 / WK1)).